The chain runs to 102 residues: NADH-quinone oxidoreductase subunit K 1 (102 aa).

3 helical membrane passes run 5 to 25, 31 to 51, and 65 to 85; these read LSHY…GIFL, IVIL…MVAF, and LFIL…LVVF.

Belongs to the complex I subunit 4L family. As to quaternary structure, NDH-1 is composed of 14 different subunits. Subunits NuoA, H, J, K, L, M, N constitute the membrane sector of the complex.

Its subcellular location is the cell inner membrane. It catalyses the reaction a quinone + NADH + 5 H(+)(in) = a quinol + NAD(+) + 4 H(+)(out). NDH-1 shuttles electrons from NADH, via FMN and iron-sulfur (Fe-S) centers, to quinones in the respiratory chain. The immediate electron acceptor for the enzyme in this species is believed to be ubiquinone. Couples the redox reaction to proton translocation (for every two electrons transferred, four hydrogen ions are translocated across the cytoplasmic membrane), and thus conserves the redox energy in a proton gradient. This Rhizobium etli (strain CIAT 652) protein is NADH-quinone oxidoreductase subunit K 1.